The following is a 132-amino-acid chain: Small ribosomal subunit protein uS11 (132 aa).

Belongs to the universal ribosomal protein uS11 family. In terms of assembly, part of the 30S ribosomal subunit.

In terms of biological role, located on the platform of the 30S subunit. In Sulfolobus acidocaldarius (strain ATCC 33909 / DSM 639 / JCM 8929 / NBRC 15157 / NCIMB 11770), this protein is Small ribosomal subunit protein uS11.